The primary structure comprises 571 residues: Proline--tRNA ligase (571 aa).

It belongs to the class-II aminoacyl-tRNA synthetase family. ProS type 1 subfamily. As to quaternary structure, homodimer.

The protein resides in the cytoplasm. The enzyme catalyses tRNA(Pro) + L-proline + ATP = L-prolyl-tRNA(Pro) + AMP + diphosphate. Its function is as follows. Catalyzes the attachment of proline to tRNA(Pro) in a two-step reaction: proline is first activated by ATP to form Pro-AMP and then transferred to the acceptor end of tRNA(Pro). As ProRS can inadvertently accommodate and process non-cognate amino acids such as alanine and cysteine, to avoid such errors it has two additional distinct editing activities against alanine. One activity is designated as 'pretransfer' editing and involves the tRNA(Pro)-independent hydrolysis of activated Ala-AMP. The other activity is designated 'posttransfer' editing and involves deacylation of mischarged Ala-tRNA(Pro). The misacylated Cys-tRNA(Pro) is not edited by ProRS. This chain is Proline--tRNA ligase, found in Shewanella frigidimarina (strain NCIMB 400).